The chain runs to 232 residues: Protein lin-7 homolog A (232 aa).

The Kinase interacting site signature appears at 14–28; the sequence is MATLTVVQPLTLDRD. Positions 25–80 constitute an L27 domain; sequence LDRDVARAIELLEKLQESGEVPVHKLQSLKKVLQSEFCTAIREVYQYMHETITVNG. Residues 108–190 enclose the PDZ domain; that stretch reads VVELPKTDEG…SVKLVVRYTP (83 aa).

This sequence belongs to the lin-7 family. Forms a complex with CASK and CASKIN1. Component of the brain-specific heterotrimeric complex (LIN-10-LIN-2-LIN-7 complex) composed of at least APBA1, CASK, and LIN7, which associates with the motor protein KIF17 to transport vesicles along microtubules. Can also interact with other modular proteins containing protein-protein interaction domains like PALS1, PALS2, MPP7, DLG1, DLG2 and DLG3 through its L27 domain. Interacts with DLG4 and GRIN2B as well as CDH1 and CTNNB1, the channels KCNJ12/Kir2.2, KCNJ4/Kir2.3 and probably KCNJ2/Kir2.1 and SLC6A12/BGT-1 via its PDZ domain. The association of LIN7A with cadherin and beta-catenin is calcium-dependent, occurs at synaptic junctions and requires the actin cytoskeleton. Interacts with EGFR, ERBB2, ERBB3 and ERBB4 with both PDZ and KID domains. Associates with KIF17 via APBA1. Interacts with HTR4. Forms a tripartite complex composed of DLG1, MPP7 and LIN7 (LIN7A or LIN7C). Interacts with MARCHF11. Ubiquitously expressed in brain and detected in lung, liver and testis (at protein level). Expression was detected only in brain.

The protein localises to the cell membrane. The protein resides in the basolateral cell membrane. It is found in the cell junction. It localises to the postsynaptic density membrane. Its subcellular location is the tight junction. Plays a role in establishing and maintaining the asymmetric distribution of channels and receptors at the plasma membrane of polarized cells. Forms membrane-associated multiprotein complexes that may regulate delivery and recycling of proteins to the correct membrane domains. The tripartite complex composed of LIN7 (LIN7A, LIN7B or LIN7C), CASK and APBA1 associates with the motor protein KIF17 to transport vesicles containing N-methyl-D-aspartate (NMDA) receptor subunit NR2B along microtubules. This complex may have the potential to couple synaptic vesicle exocytosis to cell adhesion in brain. Ensures the proper localization of GRIN2B (subunit 2B of the NMDA receptor) to neuronal postsynaptic density and may function in localizing synaptic vesicles at synapses where it is recruited by beta-catenin and cadherin. Required to localize Kir2 channels, GABA transporter (SLC6A12) and EGFR/ERBB1, ERBB2, ERBB3 and ERBB4 to the basolateral membrane of epithelial cells. This is Protein lin-7 homolog A (Lin7a) from Rattus norvegicus (Rat).